Here is a 226-residue protein sequence, read N- to C-terminus: Transcriptional activator plp-1 (226 aa).

The protein belongs to the PUR DNA-binding protein family.

It localises to the nucleus. The protein localises to the chromosome. In terms of biological role, probable transcription activator. Binds telomeric DNA containing repeats of the sequence, 5'-TTAGGC-3'. Binds to end-1 promoter, activating end-1 expression, which is required for endoderm specification during embryonic development. The protein is Transcriptional activator plp-1 of Caenorhabditis elegans.